We begin with the raw amino-acid sequence, 96 residues long: Large ribosomal subunit protein uL23 (96 aa).

It belongs to the universal ribosomal protein uL23 family. In terms of assembly, part of the 50S ribosomal subunit. Contacts protein L29, and trigger factor when it is bound to the ribosome.

Its function is as follows. One of the early assembly proteins it binds 23S rRNA. One of the proteins that surrounds the polypeptide exit tunnel on the outside of the ribosome. Forms the main docking site for trigger factor binding to the ribosome. This chain is Large ribosomal subunit protein uL23, found in Finegoldia magna (strain ATCC 29328 / DSM 20472 / WAL 2508) (Peptostreptococcus magnus).